We begin with the raw amino-acid sequence, 319 residues long: HPr kinase/phosphorylase (319 aa).

Catalysis depends on residues His-144 and Lys-165. Residue 159–166 (GKSGIGKS) coordinates ATP. Ser-166 provides a ligand contact to Mg(2+). The active-site Proton acceptor; for phosphorylation activity. Proton donor; for dephosphorylation activity is the Asp-183. Positions 207 to 216 (MEIRGLGVIN) are important for the catalytic mechanism of both phosphorylation and dephosphorylation. Glu-208 lines the Mg(2+) pocket. Arg-249 is an active-site residue. Residues 270–275 (PVRPGR) form an important for the catalytic mechanism of dephosphorylation region.

Belongs to the HPrK/P family. In terms of assembly, homohexamer. It depends on Mg(2+) as a cofactor.

It catalyses the reaction [HPr protein]-L-serine + ATP = [HPr protein]-O-phospho-L-serine + ADP + H(+). The catalysed reaction is [HPr protein]-O-phospho-L-serine + phosphate + H(+) = [HPr protein]-L-serine + diphosphate. Catalyzes the ATP- as well as the pyrophosphate-dependent phosphorylation of a specific serine residue in HPr, a phosphocarrier protein of the phosphoenolpyruvate-dependent sugar phosphotransferase system (PTS). HprK/P also catalyzes the pyrophosphate-producing, inorganic phosphate-dependent dephosphorylation (phosphorolysis) of seryl-phosphorylated HPr (P-Ser-HPr). This chain is HPr kinase/phosphorylase, found in Geobacter sulfurreducens (strain ATCC 51573 / DSM 12127 / PCA).